We begin with the raw amino-acid sequence, 373 residues long: 3-dehydroquinate synthase (373 aa).

Residues 120–124, 144–145, Lys157, Lys166, and 184–187 each bind NAD(+); these read GVVGD, TT, and FLKT. Zn(2+) contacts are provided by Glu199, His262, and His278.

It belongs to the sugar phosphate cyclases superfamily. Dehydroquinate synthase family. NAD(+) is required as a cofactor. The cofactor is Co(2+). Zn(2+) serves as cofactor.

The protein resides in the cytoplasm. It carries out the reaction 7-phospho-2-dehydro-3-deoxy-D-arabino-heptonate = 3-dehydroquinate + phosphate. The protein operates within metabolic intermediate biosynthesis; chorismate biosynthesis; chorismate from D-erythrose 4-phosphate and phosphoenolpyruvate: step 2/7. Its function is as follows. Catalyzes the conversion of 3-deoxy-D-arabino-heptulosonate 7-phosphate (DAHP) to dehydroquinate (DHQ). In Clostridium tetani (strain Massachusetts / E88), this protein is 3-dehydroquinate synthase.